Consider the following 496-residue polypeptide: Docking protein 3 (496 aa).

The interval 18–38 is disordered; sequence LSLDGGTGSGQKGKCEEFPSS. In terms of domain architecture, PH spans 63–179; sequence PIKDGILYQQ…WMGPICQLAF (117 aa). Ser-194 bears the Phosphoserine mark. Positions 213 to 317 constitute an IRS-type PTB domain; the sequence is EVGEFPVVVQ…ARQRERLPEL (105 aa). Residues 313–363 form a disordered region; that stretch reads RLPELTRPQPCPLPRATSLPSLDTPGELREMPPGPEPPTSRKMHLAEPGPQ. Phosphoserine is present on residues Ser-330 and Ser-364. Tyr-381 carries the phosphotyrosine modification. The disordered stretch occupies residues 408-447; it reads PTLHGGEPEPHEGPGSRSPTTSPIYHNGQDLSWPGPANDS. Position 425 is a phosphoserine (Ser-425).

It belongs to the DOK family. Type A subfamily. In terms of assembly, on tyrosine phosphorylation, interacts with CSK and INPP5D/SHIP1 via their SH2 domains. Both Tyr-381 and Tyr-398 are required for interaction with INPP5D. Only Tyr-381 is required for interaction with CSK. Binds ABL1 through the PTB domain and in a kinase-dependent manner. Does not interact with RasGAP. Constitutively tyrosine-phosphorylated. Post-translationally, on IL2 stimulation, phosphorylated on C-terminal tyrosine residues possibly by Src kinases. Can also be phosphorylated by ABL1 kinase. As to expression, expressed in spleen.

It is found in the cytoplasm. The protein localises to the cell membrane. In terms of biological role, DOK proteins are enzymatically inert adaptor or scaffolding proteins. They provide a docking platform for the assembly of multimolecular signaling complexes. DOK3 is a negative regulator of JNK signaling in B-cells through interaction with INPP5D/SHIP1. May modulate ABL1 function. The protein is Docking protein 3 (DOK3) of Homo sapiens (Human).